We begin with the raw amino-acid sequence, 214 residues long: Large ribosomal subunit protein uL3 (214 aa).

Residues 132 to 145 (SNRASHGNSVTTRA) show a composition bias toward polar residues. The tract at residues 132–155 (SNRASHGNSVTTRAPGSIGQAQDP) is disordered. Gln153 carries the post-translational modification N5-methylglutamine.

Belongs to the universal ribosomal protein uL3 family. As to quaternary structure, part of the 50S ribosomal subunit. Forms a cluster with proteins L14 and L19. In terms of processing, methylated by PrmB.

Functionally, one of the primary rRNA binding proteins, it binds directly near the 3'-end of the 23S rRNA, where it nucleates assembly of the 50S subunit. In Laribacter hongkongensis (strain HLHK9), this protein is Large ribosomal subunit protein uL3.